The following is a 196-amino-acid chain: Guanylate kinase (196 aa).

The Guanylate kinase-like domain maps to 7-191; the sequence is RNIVLLVGPS…AAEEIEKIIL (185 aa). 14-21 is a binding site for ATP; it reads GPSGVGKG.

It belongs to the guanylate kinase family.

The protein localises to the cytoplasm. It catalyses the reaction GMP + ATP = GDP + ADP. In terms of biological role, essential for recycling GMP and indirectly, cGMP. The polypeptide is Guanylate kinase (Mycoplasmopsis pulmonis (strain UAB CTIP) (Mycoplasma pulmonis)).